Reading from the N-terminus, the 871-residue chain is Translation initiation factor IF-2 (871 aa).

Residues 1 to 242 are disordered; it reads MVDTKNPGDK…PAAKPAPAKQ (242 aa). Over residues 68–91 the composition is skewed to low complexity; that stretch reads PASARTPAAKAPPARAATPAAPRA. The segment covering 115–174 has biased composition (basic and acidic residues); the sequence is AKVRAEEERRIAEAEAARRNSKEGIEQAEREAAEARRKAEEERHRQEEEAKRKAEIEAKR. Low complexity-rich tracts occupy residues 182 to 206 and 225 to 241; these read KPAPAKTTTTTTRAAPPARPAAVAA and ARPVIAPKPAAKPAPAK. Positions 367–538 constitute a tr-type G domain; the sequence is PRSPVVTVMG…SLQADLLDLK (172 aa). The segment at 376-383 is G1; the sequence is GHVDHGKT. A GTP-binding site is contributed by 376-383; the sequence is GHVDHGKT. The tract at residues 401–405 is G2; that stretch reads GITQH. A G3 region spans residues 424-427; the sequence is DTPG. GTP contacts are provided by residues 424–428 and 478–481; these read DTPGH and NKID. The interval 478–481 is G4; that stretch reads NKID. Residues 514-516 form a G5 region; it reads SAK.

This sequence belongs to the TRAFAC class translation factor GTPase superfamily. Classic translation factor GTPase family. IF-2 subfamily.

It localises to the cytoplasm. In terms of biological role, one of the essential components for the initiation of protein synthesis. Protects formylmethionyl-tRNA from spontaneous hydrolysis and promotes its binding to the 30S ribosomal subunits. Also involved in the hydrolysis of GTP during the formation of the 70S ribosomal complex. In Nitrobacter winogradskyi (strain ATCC 25391 / DSM 10237 / CIP 104748 / NCIMB 11846 / Nb-255), this protein is Translation initiation factor IF-2.